We begin with the raw amino-acid sequence, 399 residues long: Glutathione S-transferase LANCL1 (399 aa).

A2 carries the post-translational modification N-acetylalanine. K142 carries the post-translational modification N6-acetyllysine. Residue C276 coordinates Zn(2+). Residue K317 participates in glutathione binding. Zn(2+)-binding residues include C322 and H323. Glutathione is bound at residue 364–367 (RTPD).

This sequence belongs to the LanC-like protein family. In terms of assembly, interacts with the C-terminal of STOM. Interacts with the EPS8 SH3 domain. Interaction with EPS8 is inhibited by glutathione binding. In terms of tissue distribution, expressed in brain.

It is found in the cytoplasm. Its subcellular location is the cell membrane. It catalyses the reaction RX + glutathione = an S-substituted glutathione + a halide anion + H(+). The enzyme catalyses 1-chloro-2,4-dinitrobenzene + glutathione = 2,4-dinitrophenyl-S-glutathione + chloride + H(+). Functions as a glutathione transferase. Catalyzes conjugation of the glutathione (GSH) to artificial substrates 1-chloro-2,4-dinitrobenzene (CDNB) and p-nitrophenyl acetate. Mitigates neuronal oxidative stress during normal postnatal development and in response to oxidative stresses probably through GSH antioxidant defense mechanism. May play a role in EPS8 signaling. Binds glutathione. The sequence is that of Glutathione S-transferase LANCL1 (LANCL1) from Bos taurus (Bovine).